Here is a 299-residue protein sequence, read N- to C-terminus: GTPase Era (299 aa).

The 169-residue stretch at 2–170 (KTGFVALAGK…LDLIIENLPE (169 aa)) folds into the Era-type G domain. A G1 region spans residues 10–17 (GKPNVGKS). Residue 10 to 17 (GKPNVGKS) coordinates GTP. The G2 stretch occupies residues 36–40 (QTTRN). The G3 stretch occupies residues 57–60 (DTPG). Residues 57-61 (DTPGI) and 119-122 (NKID) contribute to the GTP site. Residues 119 to 122 (NKID) are G4. A G5 region spans residues 149 to 151 (TSA). The KH type-2 domain occupies 201–278 (TYEEIPHSVA…FLDLHVKVKR (78 aa)).

The protein belongs to the TRAFAC class TrmE-Era-EngA-EngB-Septin-like GTPase superfamily. Era GTPase family. Monomer.

The protein resides in the cytoplasm. Its subcellular location is the cell inner membrane. Its function is as follows. An essential GTPase that binds both GDP and GTP, with rapid nucleotide exchange. Plays a role in 16S rRNA processing and 30S ribosomal subunit biogenesis and possibly also in cell cycle regulation and energy metabolism. This Thermosipho melanesiensis (strain DSM 12029 / CIP 104789 / BI429) protein is GTPase Era.